A 218-amino-acid polypeptide reads, in one-letter code: Adenylate kinase (218 aa).

10–15 provides a ligand contact to ATP; the sequence is GAGKGT. An NMP region spans residues 30–59; the sequence is STGDMLRAAVKAQSELGMAAKKVMDEGGLV. AMP-binding positions include threonine 31, arginine 36, 57 to 59, 85 to 88, and glutamine 92; these read GLV and GFPR. Positions 122 to 159 are LID; the sequence is GRRVHPASGRTYHIVFNPPAVEGKDDVTGEDLVQRDDD. ATP is bound by residues arginine 123 and 132–133; that span reads TY. 2 residues coordinate AMP: arginine 156 and arginine 167. ATP is bound at residue glycine 203.

This sequence belongs to the adenylate kinase family. As to quaternary structure, monomer.

It localises to the cytoplasm. It carries out the reaction AMP + ATP = 2 ADP. It functions in the pathway purine metabolism; AMP biosynthesis via salvage pathway; AMP from ADP: step 1/1. Catalyzes the reversible transfer of the terminal phosphate group between ATP and AMP. Plays an important role in cellular energy homeostasis and in adenine nucleotide metabolism. This chain is Adenylate kinase, found in Chlorobaculum parvum (strain DSM 263 / NCIMB 8327) (Chlorobium vibrioforme subsp. thiosulfatophilum).